A 285-amino-acid chain; its full sequence is Homeobox protein Hox-A13b (285 aa).

Residues 219–278 (GRKKRVPYTKVQLKELEREYAANKFITKDKRRRISAQTNLTERQVTIWFQNRRVKEKKVV) constitute a DNA-binding region (homeobox).

The protein belongs to the Abd-B homeobox family.

It is found in the nucleus. Sequence-specific transcription factor which is part of a developmental regulatory system that provides cells with specific positional identities on the anterior-posterior axis. The chain is Homeobox protein Hox-A13b (hoxa13b) from Takifugu rubripes (Japanese pufferfish).